Consider the following 108-residue polypeptide: UPF0060 membrane protein sll0793 (108 aa).

4 helical membrane passes run 7 to 27, 32 to 52, 64 to 84, and 86 to 106; these read LYFVMAGLCEIGGGYLVWLWI, SVWLALVRAILLTVYGFVATL, YGGIFIILSIIWGWQVDNVVV, and RLDWLGAAIALVGVLVMMYAN.

It belongs to the UPF0060 family.

The protein resides in the cell inner membrane. This is UPF0060 membrane protein sll0793 from Synechocystis sp. (strain ATCC 27184 / PCC 6803 / Kazusa).